The sequence spans 331 residues: Small ribosomal subunit protein uS2 (331 aa).

Belongs to the universal ribosomal protein uS2 family.

This is Small ribosomal subunit protein uS2 from Rhodopseudomonas palustris (strain ATCC BAA-98 / CGA009).